A 501-amino-acid polypeptide reads, in one-letter code: DNA nucleotidylexotransferase (501 aa).

Residues 11–17 (KKRKRPV) carry the Nuclear localization signal motif. A BRCT domain is found at 24 to 121 (QVEVKFKEVT…RPVRVETRHS (98 aa)). The tract at residues 249–253 (VGPKT) is involved in DNA binding. A 2'-deoxyribonucleoside 5'-triphosphate-binding positions include 324 to 329 (GFRRGK) and 333 to 336 (HDVD). Residues Asp334, Asp336, and Asp426 each coordinate Mg(2+). 441-442 (GW) serves as a coordination point for a 2'-deoxyribonucleoside 5'-triphosphate.

It belongs to the DNA polymerase type-X family. Mg(2+) is required as a cofactor.

Its subcellular location is the nucleus. It catalyses the reaction DNA(n) + a 2'-deoxyribonucleoside 5'-triphosphate = DNA(n+1) + diphosphate. Functionally, template-independent DNA polymerase which catalyzes the random addition of deoxynucleoside 5'-triphosphate to the 3'-end of a DNA initiator. One of the in vivo functions of this enzyme is the addition of nucleotides at the junction (N region) of rearranged Ig heavy chain and T-cell receptor gene segments during the maturation of B- and T-cells. The polypeptide is DNA nucleotidylexotransferase (dntt) (Oncorhynchus mykiss (Rainbow trout)).